We begin with the raw amino-acid sequence, 76 residues long: Large ribosomal subunit protein bL31 (76 aa).

Belongs to the bacterial ribosomal protein bL31 family. Type A subfamily. As to quaternary structure, part of the 50S ribosomal subunit.

Binds the 23S rRNA. The polypeptide is Large ribosomal subunit protein bL31 (Methylocella silvestris (strain DSM 15510 / CIP 108128 / LMG 27833 / NCIMB 13906 / BL2)).